Reading from the N-terminus, the 78-residue chain is Putative membrane protein insertion efficiency factor (78 aa).

It belongs to the UPF0161 family.

Its subcellular location is the cell membrane. Functionally, could be involved in insertion of integral membrane proteins into the membrane. This Bacillus mycoides (strain KBAB4) (Bacillus weihenstephanensis) protein is Putative membrane protein insertion efficiency factor.